Reading from the N-terminus, the 932-residue chain is Protein hir1 (932 aa).

WD repeat units follow at residues 16–55 (GHRL…RENE), 72–111 (THTG…PGLG), 132–171 (GHDN…RLKR), 174–213 (AHQS…IEKT), 222–265 (PLST…SEIN), 268–316 (GHEG…PLLS), and 320–361 (VFQK…DMVS). Polar residues-rich tracts occupy residues 405 to 426 (STTD…QKTP) and 441 to 453 (TVDT…SKEQ). Disordered stretches follow at residues 405 to 470 (STTD…NEIP) and 498 to 520 (TPST…LPPQ). Over residues 498 to 507 (TPSTSRLAST) the composition is skewed to low complexity.

The protein belongs to the WD repeat HIR1 family. Interacts with his3 and slm9.

Its subcellular location is the cytoplasm. It localises to the nucleus. In terms of biological role, probably required for replication-independent chromatin assembly. Required for transcriptional silencing in the outer repeat (otr) centromeric repeats and the Tf2 long terminal repeat retrotransposons. Repressor of histone gene transcription in G1 arrested cells. Required for repression of htb1 gene expression outside of S phase. This Schizosaccharomyces pombe (strain 972 / ATCC 24843) (Fission yeast) protein is Protein hir1 (hip1).